A 322-amino-acid chain; its full sequence is UV DNA damage endonuclease (322 aa).

The protein belongs to the uve1/UvsE family.

Its function is as follows. Component in a DNA repair pathway. Removal of UV LIGHT damaged nucleotides. Recognizes pyrimidine dimers and cleave a phosphodiester bond immediately 5' to the lesion. This chain is UV DNA damage endonuclease, found in Halalkalibacterium halodurans (strain ATCC BAA-125 / DSM 18197 / FERM 7344 / JCM 9153 / C-125) (Bacillus halodurans).